The sequence spans 370 residues: Ubiquinone biosynthesis O-methyltransferase, mitochondrial (370 aa).

The N-terminal 86 residues, 1–86 (MWGGSKLSSS…SYRLPWTRPY (86 aa)), are a transit peptide targeting the mitochondrion. An S-adenosyl-L-methionine-binding site is contributed by Arg-125. N6-acetyllysine occurs at positions 144 and 150. S-adenosyl-L-methionine contacts are provided by Gly-155 and Asp-176. The residue at position 197 (Lys-197) is an N6-acetyllysine. Ser-223 lines the S-adenosyl-L-methionine pocket. Glu-224, Glu-227, and His-228 together coordinate Mg(2+).

This sequence belongs to the class I-like SAM-binding methyltransferase superfamily. UbiG/COQ3 family. Component of a multi-subunit COQ enzyme complex, composed of at least COQ3, COQ4, COQ5, COQ6, COQ7 and COQ9. It depends on Mg(2+) as a cofactor.

It is found in the mitochondrion inner membrane. It carries out the reaction 3,4-dihydroxy-5-(all-trans-decaprenyl)benzoate + S-adenosyl-L-methionine = 4-hydroxy-3-methoxy-5-(all-trans-decaprenyl)benzoate + S-adenosyl-L-homocysteine + H(+). The catalysed reaction is a 3-demethylubiquinone + S-adenosyl-L-methionine = a ubiquinone + S-adenosyl-L-homocysteine. The enzyme catalyses 3-demethylubiquinol-10 + S-adenosyl-L-methionine = ubiquinol-10 + S-adenosyl-L-homocysteine + H(+). It participates in cofactor biosynthesis; ubiquinone biosynthesis. Its function is as follows. O-methyltransferase required for two non-consecutive steps during ubiquinone biosynthesis. Catalyzes the 2 O-methylation of 3,4-dihydroxy-5-(all-trans-decaprenyl)benzoic acid into 4-hydroxy-3-methoxy-5-(all-trans-decaprenyl)benzoic acid. Also catalyzes the last step of ubiquinone biosynthesis by mediating methylation of 3-demethylubiquinone into ubiquinone. Also able to mediate the methylation of 3-demethylubiquinol-10 into ubiquinol-10. This is Ubiquinone biosynthesis O-methyltransferase, mitochondrial from Bos taurus (Bovine).